The chain runs to 522 residues: Peptide chain release factor 3 (522 aa).

The tr-type G domain maps to 9-276 (KKRRTFAIIS…SFVNLAPAPQ (268 aa)). Residues 18–25 (SHPDAGKT), 86–90 (DTPGH), and 140–143 (NKLD) each bind GTP.

It belongs to the TRAFAC class translation factor GTPase superfamily. Classic translation factor GTPase family. PrfC subfamily.

The protein localises to the cytoplasm. Functionally, increases the formation of ribosomal termination complexes and stimulates activities of RF-1 and RF-2. It binds guanine nucleotides and has strong preference for UGA stop codons. It may interact directly with the ribosome. The stimulation of RF-1 and RF-2 is significantly reduced by GTP and GDP, but not by GMP. This chain is Peptide chain release factor 3, found in Lactobacillus johnsonii (strain CNCM I-12250 / La1 / NCC 533).